Here is a 410-residue protein sequence, read N- to C-terminus: tRNA-guanine(15) transglycosylase (410 aa).

The Nucleophile role is filled by Asp-87. Positions 122 and 187 each coordinate substrate.

It belongs to the archaeosine tRNA-ribosyltransferase family. Zn(2+) is required as a cofactor.

The catalysed reaction is guanosine(15) in tRNA + 7-cyano-7-deazaguanine = 7-cyano-7-carbaguanosine(15) in tRNA + guanine. The protein operates within tRNA modification; archaeosine-tRNA biosynthesis. Functionally, exchanges the guanine residue with 7-cyano-7-deazaguanine (preQ0) at position 15 in the dihydrouridine loop (D-loop) of archaeal tRNAs. The sequence is that of tRNA-guanine(15) transglycosylase from Nanoarchaeum equitans (strain Kin4-M).